Here is a 152-residue protein sequence, read N- to C-terminus: MKLIASNKKAYFDYEILETLEAGLALLGSEVKALRQTRVNLKDNFVKIIKGEAFLFGVHISYLDTIHAYYKPNERRERKLLLHKKQLLKWQMEASKERLSIVGLKLYFNQKNRAKIQIALVKGKRLHDKRQSLKEKALNKEILADLKHHFKG.

This sequence belongs to the SmpB family.

Its subcellular location is the cytoplasm. Functionally, required for rescue of stalled ribosomes mediated by trans-translation. Binds to transfer-messenger RNA (tmRNA), required for stable association of tmRNA with ribosomes. tmRNA and SmpB together mimic tRNA shape, replacing the anticodon stem-loop with SmpB. tmRNA is encoded by the ssrA gene; the 2 termini fold to resemble tRNA(Ala) and it encodes a 'tag peptide', a short internal open reading frame. During trans-translation Ala-aminoacylated tmRNA acts like a tRNA, entering the A-site of stalled ribosomes, displacing the stalled mRNA. The ribosome then switches to translate the ORF on the tmRNA; the nascent peptide is terminated with the 'tag peptide' encoded by the tmRNA and targeted for degradation. The ribosome is freed to recommence translation, which seems to be the essential function of trans-translation. The protein is SsrA-binding protein of Helicobacter pylori (strain J99 / ATCC 700824) (Campylobacter pylori J99).